The primary structure comprises 620 residues: E3 ubiquitin-protein ligase DTX1 (620 aa).

WWE domains lie at 14-94 (GLGF…PVRR) and 95-171 (NFYD…RLRR). 3 disordered regions span residues 221-248 (SQRR…LAVR), 262-313 (PAAG…SIPP), and 361-391 (PPVS…KSKN). Pro residues-rich tracts occupy residues 227 to 241 (PPAP…PGGP) and 268 to 280 (EPAP…PRSP). The SH3-binding signature appears at 230–233 (PPLP). Residues 291 to 307 (QNNLNRPGPQRTTSVSA) show a composition bias toward polar residues. The segment covering 379–389 (RKTKKKHLKKS) has biased composition (basic residues). An RING-type zinc finger spans residues 411–472 (CTICMERLVT…DGSLQCPTCK (62 aa)).

This sequence belongs to the Deltex family. As to quaternary structure, homodimer. May form a heterodimer with other members of the Deltex family. Interacts with NOTCH1 via its N-terminal region and EIF3F, the interaction is required for NOTCH1 deubiquitination. Interacts with EP300. Forms a heterodimer with BBAP; the heterodimerization leading to an increase of in vitro ubiquitin ligase activity. Interacts with ITCH. Ubiquitinated; undergoes 'Lys-29'-linked polyubiquitination catalyzed by ITCH. In terms of tissue distribution, widely expressed. Strongly expressed in blood vessel. Also expressed in embryonic nervous system, pancreas, lung, adrenal gland, digestive tube and muscles. Expressed in MZB cells and developing B- and T-cells.

The protein resides in the cytoplasm. Its subcellular location is the nucleus. It catalyses the reaction S-ubiquitinyl-[E2 ubiquitin-conjugating enzyme]-L-cysteine + [acceptor protein]-L-lysine = [E2 ubiquitin-conjugating enzyme]-L-cysteine + N(6)-ubiquitinyl-[acceptor protein]-L-lysine.. The protein operates within protein modification; protein ubiquitination. Its function is as follows. Functions as a ubiquitin ligase protein in vivo, mediating ubiquitination and promoting degradation of MEKK1, suggesting that it may regulate the Notch pathway via some ubiquitin ligase activity. Regulator of Notch signaling, a signaling pathway involved in cell-cell communications that regulates a broad spectrum of cell-fate determinations. Mainly acts as a positive regulator of Notch, but it also acts as a negative regulator, depending on the developmental and cell context. Mediates the antineural activity of Notch, possibly by inhibiting the transcriptional activation mediated by MATCH1. Involved in neurogenesis, lymphogenesis and myogenesis, and may also be involved in MZB (Marginal zone B) cell differentiation. Promotes B-cell development at the expense of T-cell development, suggesting that it can antagonize NOTCH1. The polypeptide is E3 ubiquitin-protein ligase DTX1 (DTX1) (Homo sapiens (Human)).